The primary structure comprises 209 residues: ATP-dependent Clp protease proteolytic subunit (209 aa).

Ser113 serves as the catalytic Nucleophile. The active site involves His138.

The protein belongs to the peptidase S14 family. Fourteen ClpP subunits assemble into 2 heptameric rings which stack back to back to give a disk-like structure with a central cavity, resembling the structure of eukaryotic proteasomes.

The protein resides in the cytoplasm. It carries out the reaction Hydrolysis of proteins to small peptides in the presence of ATP and magnesium. alpha-casein is the usual test substrate. In the absence of ATP, only oligopeptides shorter than five residues are hydrolyzed (such as succinyl-Leu-Tyr-|-NHMec, and Leu-Tyr-Leu-|-Tyr-Trp, in which cleavage of the -Tyr-|-Leu- and -Tyr-|-Trp bonds also occurs).. Cleaves peptides in various proteins in a process that requires ATP hydrolysis. Has a chymotrypsin-like activity. Plays a major role in the degradation of misfolded proteins. The sequence is that of ATP-dependent Clp protease proteolytic subunit from Blochmanniella floridana.